Consider the following 1081-residue polypeptide: Dyslexia-associated protein KIAA0319 homolog (1081 aa).

Positions 1–22 are cleaved as a signal peptide; that stretch reads MVSPPGVLSSLLLLAAMAGGSS. The region spanning 23–99 is the MANSC domain; sequence QQCSEGRTYS…PRTTGPIRSY (77 aa). Residues 23–964 lie on the Extracellular side of the membrane; it reads QQCSEGRTYS…WDGESNCEWS (942 aa). Disordered regions lie at residues 141-160, 168-216, and 228-298; these read LPFL…SDDY, LQPS…DLTP, and NEST…TTVE. 3 stretches are compositionally biased toward polar residues: residues 197–209, 228–253, and 283–298; these read ASAT…ASTE, NEST…TASP, and HNPS…TTVE. 5 consecutive PKD domains span residues 345–436, 444–533, 539–629, 630–723, and 729–820; these read AVSA…VMPA, VAIV…IRGS, VANA…VQAE, NNQA…VKKE, and RAQA…VLPD. N-linked (GlcNAc...) asparagine glycosylation is found at Asn-430 and Asn-522. The helical transmembrane segment at 965 to 985 threads the bilayer; sequence VFYVAALALTLTVLTGAVTWV. At 986–1081 the chain is on the cytoplasmic side; sequence CICCCRRRKR…VSFGYYSKDR (96 aa). The short motif at 1004–1007 is the Endocytosis signal element; the sequence is YTIL.

As to quaternary structure, homodimer. Interacts with AP2M1; required for clathrin-mediated endocytosis. Post-translationally, N-glycosylated. In terms of processing, O-glycosylated. Shedding of the extracellular domain and intramembrane cleavage produce several proteolytic products. The intramembrane cleavage releases a soluble cytoplasmic polypeptide that translocates to the nucleolus. Highly expressed during development in ventricular zone, intermediate zone, cortical plate, striatum, hippocampus, and brain stem.

It is found in the cell membrane. The protein localises to the early endosome membrane. Involved in neuronal migration during development of the cerebral neocortex. May function in a cell autonomous and a non-cell autonomous manner and play a role in appropriate adhesion between migrating neurons and radial glial fibers. May also regulate growth and differentiation of dendrites. In Rattus norvegicus (Rat), this protein is Dyslexia-associated protein KIAA0319 homolog.